A 110-amino-acid polypeptide reads, in one-letter code: Ribonuclease P protein component 4 (110 aa).

Zn(2+) contacts are provided by C65, C68, C94, and C97.

It belongs to the eukaryotic/archaeal RNase P protein component 4 family. As to quaternary structure, consists of a catalytic RNA component and at least 4-5 protein subunits. Zn(2+) is required as a cofactor.

It localises to the cytoplasm. The enzyme catalyses Endonucleolytic cleavage of RNA, removing 5'-extranucleotides from tRNA precursor.. Its function is as follows. Part of ribonuclease P, a protein complex that generates mature tRNA molecules by cleaving their 5'-ends. This is Ribonuclease P protein component 4 from Methanococcus maripaludis (strain C5 / ATCC BAA-1333).